The primary structure comprises 117 residues: Minor capsid protein p17 (117 aa).

The N-linked (GlcNAc...) asparagine; by host glycan is linked to Asn-12. A helical membrane pass occupies residues 39–59 (AIILGILILLVIILIIVAIVY). N-linked (GlcNAc...) asparagine; by host glycans are attached at residues Asn-61 and Asn-97.

The protein belongs to the asfivirus minor capsid protein p17 family. As to quaternary structure, interacts with the minor capsid protein M1249L and with the hexon capsid protein p72 capsomers; these interactions form a rigid zipper structure that stabilizes the capsomers. Interacts with host STING1.

It localises to the virion membrane. Its subcellular location is the host endoplasmic reticulum membrane. Together with the penton and the other minor capsid proteins (M1249L, p49), forms a complicated network immediately below the outer capsid shell, stabilizing the whole capsid. Three copies of p17 encircle each p72 capsomer in the inner capsid shell, anchoring p72 capsomers on the inner membrane. Required for the assembly of the capsid and icosahedral morphogenesis. Additionally, inhibits the host cGAS-STING pathway through its interaction with STING1 and subsequent interference of the recruitment of downstream components TBK1 and IKBKE. In Ornithodoros (relapsing fever ticks), this protein is Minor capsid protein p17.